A 77-amino-acid polypeptide reads, in one-letter code: Acyl carrier protein (77 aa).

Positions 1–77 (MSVEAKVKKI…DAIEYIRKKS (77 aa)) constitute a Carrier domain. Ser-37 is modified (O-(pantetheine 4'-phosphoryl)serine).

It belongs to the acyl carrier protein (ACP) family. In terms of processing, 4'-phosphopantetheine is transferred from CoA to a specific serine of apo-ACP by AcpS. This modification is essential for activity because fatty acids are bound in thioester linkage to the sulfhydryl of the prosthetic group.

Its subcellular location is the cytoplasm. It functions in the pathway lipid metabolism; fatty acid biosynthesis. Its function is as follows. Carrier of the growing fatty acid chain in fatty acid biosynthesis. In Desulforapulum autotrophicum (strain ATCC 43914 / DSM 3382 / VKM B-1955 / HRM2) (Desulfobacterium autotrophicum), this protein is Acyl carrier protein.